The sequence spans 81 residues: Exodeoxyribonuclease 7 small subunit (81 aa).

The tract at residues 61–81 (MNDSDQEVAFETPQGGTGDAD) is disordered.

This sequence belongs to the XseB family. In terms of assembly, heterooligomer composed of large and small subunits.

The protein localises to the cytoplasm. It catalyses the reaction Exonucleolytic cleavage in either 5'- to 3'- or 3'- to 5'-direction to yield nucleoside 5'-phosphates.. Functionally, bidirectionally degrades single-stranded DNA into large acid-insoluble oligonucleotides, which are then degraded further into small acid-soluble oligonucleotides. This Levilactobacillus brevis (strain ATCC 367 / BCRC 12310 / CIP 105137 / JCM 1170 / LMG 11437 / NCIMB 947 / NCTC 947) (Lactobacillus brevis) protein is Exodeoxyribonuclease 7 small subunit.